Reading from the N-terminus, the 704-residue chain is Chloride intracellular channel protein 6 (704 aa).

Residues 1–13 (MAEAAEPEGVAPG) are compositionally biased toward low complexity. Residues 1–446 (MAEAAEPEGV…EDGEASEPRA (446 aa)) are disordered. Over residues 39–48 (EGPEGSEGAE) the composition is skewed to acidic residues. Residue serine 44 is modified to Phosphoserine. The segment covering 67 to 83 (RGPEAEARGTRGAHGET) has biased composition (basic and acidic residues). Low complexity predominate over residues 90–100 (PEGAEVPQGGE). The span at 121 to 147 (PRGEAQREPEDSAAPERQEEAEQRPEV) shows a compositional bias: basic and acidic residues. 13 consecutive repeat copies span residues 157–166 (GDSVDAEGPL), 167–176 (GDNIEAEGPA), 177–186 (GDSVEAEGRV), 187–196 (GDSVDAEGPA), 197–206 (GDSVDAEGPL), 207–216 (GDNIQAEGPA), 217–226 (GDSVDAEGRV), 227–236 (GDSVDAEGPA), 237–246 (GDSVDAEGRV), 247–256 (GDSVEAGDPA), 257–266 (GDGVEAGVPA), 267–276 (GDSVEAEGPA), and 277–286 (GDSMDAEGPA). Residues 157–282 (GDSVDAEGPL…EGPAGDSMDA (126 aa)) form a 13 X 10 AA tandem repeat of G-D-[SNG]-[VIM]-[DEQ]-A-[EAG]-[GDVE]-[PRG]-[LAVP] region. Positions 295–306 (EPQQSGDGSLSP) are enriched in polar residues. Composition is skewed to basic and acidic residues over residues 350–360 (ARADAGEDRVG) and 371–385 (EERR…REEE). A phosphoserine mark is found at serine 397 and serine 442. Residues 434-446 (GRREDGEASEPRA) are compositionally biased toward basic and acidic residues. The G-site motif lies at 487 to 490 (CPFS). The helical transmembrane segment at 489–509 (FSQRLFMILWLKGVIFNVTTV) threads the bilayer. The GST C-terminal domain occupies 556-704 (YPKLGTQHPE…AYSDVAKRMK (149 aa)).

Belongs to the chloride channel CLIC family. In terms of assembly, monomer (soluble state). Interacts with dopamine receptors DRD2, DRD3 and DRD4. Post-translationally, phosphorylated. As to expression, expressed in brain, placenta, pancreas, liver, lung, heart, kidney, liver, spleen, soleus muscle, and brown fat.

The protein localises to the cytoplasm. It is found in the cell membrane. It carries out the reaction chloride(in) = chloride(out). Channel activity is redox- and pH-regulated. Inhibited by IAA-94. Its function is as follows. In the soluble state, catalyzes glutaredoxin-like thiol disulfide exchange reactions with reduced glutathione as electron donor. Can insert into membranes and form voltage-dependent chloride-selective channels. The channel opens upon membrane depolarization at positive voltages and closes at negative membrane voltages. May play a critical role in water-secreting cells, possibly through the regulation of chloride ion transport. The protein is Chloride intracellular channel protein 6 of Homo sapiens (Human).